The sequence spans 595 residues: Flap endonuclease 1 (595 aa).

Residues 1–106 (MGIKGLTKFI…SELEKRGEKR (106 aa)) are N-domain. Residue Asp-34 coordinates Mg(2+). The DNA site is built by Arg-47 and Arg-72. Mg(2+)-binding residues include Asp-88, Glu-160, Glu-162, Asp-181, and Asp-183. Residues 124-267 (EIKKQSGRTV…KTAYNLIKEY (144 aa)) are I-domain. A DNA-binding site is contributed by Glu-160. DNA is bound by residues Gly-245 and Asp-247. Asp-247 is a Mg(2+) binding site. The tract at residues 350 to 358 (TQRRLDNFF) is interaction with PCNA. Residues 370 to 493 (NEESQIKKEV…TGDVYSFPNG (124 aa)) form a disordered region. The segment covering 392–401 (NDSSTKLNSK) has biased composition (polar residues). Basic and acidic residues predominate over residues 406–425 (PKGEKESKTEKDDGDTHNGN). A compositionally biased stretch (acidic residues) spans 426 to 436 (DNEEEGGEGET). Basic and acidic residues predominate over residues 461–475 (HKSDSESGNVKKEST).

Belongs to the XPG/RAD2 endonuclease family. FEN1 subfamily. Interacts with PCNA. Three molecules of FEN1 bind to one PCNA trimer with each molecule binding to one PCNA monomer. PCNA stimulates the nuclease activity without altering cleavage specificity. Requires Mg(2+) as cofactor. In terms of processing, phosphorylated. Phosphorylation upon DNA damage induces relocalization to the nuclear plasma.

Its subcellular location is the nucleus. It is found in the nucleolus. The protein localises to the nucleoplasm. It localises to the mitochondrion. Structure-specific nuclease with 5'-flap endonuclease and 5'-3' exonuclease activities involved in DNA replication and repair. During DNA replication, cleaves the 5'-overhanging flap structure that is generated by displacement synthesis when DNA polymerase encounters the 5'-end of a downstream Okazaki fragment. It enters the flap from the 5'-end and then tracks to cleave the flap base, leaving a nick for ligation. Also involved in the long patch base excision repair (LP-BER) pathway, by cleaving within the apurinic/apyrimidinic (AP) site-terminated flap. Acts as a genome stabilization factor that prevents flaps from equilibrating into structures that lead to duplications and deletions. Also possesses 5'-3' exonuclease activity on nicked or gapped double-stranded DNA, and exhibits RNase H activity. Also involved in replication and repair of rDNA and in repairing mitochondrial DNA. The protein is Flap endonuclease 1 of Plasmodium knowlesi (strain H).